Consider the following 367-residue polypeptide: Chorismate synthase (367 aa).

Arg48 is a binding site for NADP(+). FMN contacts are provided by residues Arg125–Ser127, Asn241–Ala242, Gly285, Lys300–Ser304, and Arg326.

The protein belongs to the chorismate synthase family. In terms of assembly, homotetramer. FMNH2 serves as cofactor.

It catalyses the reaction 5-O-(1-carboxyvinyl)-3-phosphoshikimate = chorismate + phosphate. The protein operates within metabolic intermediate biosynthesis; chorismate biosynthesis; chorismate from D-erythrose 4-phosphate and phosphoenolpyruvate: step 7/7. Functionally, catalyzes the anti-1,4-elimination of the C-3 phosphate and the C-6 proR hydrogen from 5-enolpyruvylshikimate-3-phosphate (EPSP) to yield chorismate, which is the branch point compound that serves as the starting substrate for the three terminal pathways of aromatic amino acid biosynthesis. This reaction introduces a second double bond into the aromatic ring system. The protein is Chorismate synthase of Dinoroseobacter shibae (strain DSM 16493 / NCIMB 14021 / DFL 12).